The chain runs to 248 residues: 4-hydroxy-tetrahydrodipicolinate reductase (248 aa).

NAD(+) contacts are provided by residues G9–V14, G77–T79, and A104–F107. H134 acts as the Proton donor/acceptor in catalysis. H135 contacts (S)-2,3,4,5-tetrahydrodipicolinate. Catalysis depends on K138, which acts as the Proton donor. A (S)-2,3,4,5-tetrahydrodipicolinate-binding site is contributed by G144–T145. The segment at R157–A176 is disordered.

This sequence belongs to the DapB family.

It localises to the cytoplasm. The catalysed reaction is (S)-2,3,4,5-tetrahydrodipicolinate + NAD(+) + H2O = (2S,4S)-4-hydroxy-2,3,4,5-tetrahydrodipicolinate + NADH + H(+). It catalyses the reaction (S)-2,3,4,5-tetrahydrodipicolinate + NADP(+) + H2O = (2S,4S)-4-hydroxy-2,3,4,5-tetrahydrodipicolinate + NADPH + H(+). It participates in amino-acid biosynthesis; L-lysine biosynthesis via DAP pathway; (S)-tetrahydrodipicolinate from L-aspartate: step 4/4. Catalyzes the conversion of 4-hydroxy-tetrahydrodipicolinate (HTPA) to tetrahydrodipicolinate. This Corynebacterium diphtheriae (strain ATCC 700971 / NCTC 13129 / Biotype gravis) protein is 4-hydroxy-tetrahydrodipicolinate reductase.